The primary structure comprises 383 residues: Meiotically up-regulated gene 93 protein (383 aa).

A TPR repeat occupies 75 to 108; it reads KKVIWRRGLAYLRLGHPHLANRDWEHSLELDPNN.

It localises to the cytoplasm. The protein resides in the nucleus. In terms of biological role, has a role in meiosis. This Schizosaccharomyces pombe (strain 972 / ATCC 24843) (Fission yeast) protein is Meiotically up-regulated gene 93 protein (mug93).